Reading from the N-terminus, the 198-residue chain is Nucleoside triphosphate pyrophosphatase 1 (198 aa).

Catalysis depends on Asp75, which acts as the Proton acceptor.

Belongs to the Maf family. A divalent metal cation serves as cofactor.

The protein localises to the cytoplasm. It carries out the reaction a ribonucleoside 5'-triphosphate + H2O = a ribonucleoside 5'-phosphate + diphosphate + H(+). The catalysed reaction is a 2'-deoxyribonucleoside 5'-triphosphate + H2O = a 2'-deoxyribonucleoside 5'-phosphate + diphosphate + H(+). In terms of biological role, nucleoside triphosphate pyrophosphatase. May have a dual role in cell division arrest and in preventing the incorporation of modified nucleotides into cellular nucleic acids. The chain is Nucleoside triphosphate pyrophosphatase 1 from Jannaschia sp. (strain CCS1).